A 22-amino-acid chain; its full sequence is RDCCTPPKKCKDRRCKPLKCCA.

3 disulfide bridges follow: C3–C15, C4–C20, and C10–C21. P6, P7, and P17 each carry 4-hydroxyproline. A22 carries the post-translational modification Alanine amide.

The protein belongs to the conotoxin M superfamily. In terms of tissue distribution, expressed by the venom duct.

It is found in the secreted. In terms of biological role, mu-conotoxins block voltage-gated sodium channels (Nav). This toxin shows potent activity on Nav1.4/SCN4A (IC(50)=286 nM), and weak activity on mNav1.6/SCN8A. The chain is Mu-conotoxin GIIIC from Conus geographus (Geography cone).